Here is a 372-residue protein sequence, read N- to C-terminus: Glutamate 5-kinase (372 aa).

Lys14 contributes to the ATP binding site. Ser54, Asp141, and Asn153 together coordinate substrate. 173–174 (TD) contributes to the ATP binding site. The PUA domain maps to 280–358 (RGRVVIDAGA…SEIESVLGHL (79 aa)).

It belongs to the glutamate 5-kinase family.

It is found in the cytoplasm. It carries out the reaction L-glutamate + ATP = L-glutamyl 5-phosphate + ADP. The protein operates within amino-acid biosynthesis; L-proline biosynthesis; L-glutamate 5-semialdehyde from L-glutamate: step 1/2. Functionally, catalyzes the transfer of a phosphate group to glutamate to form L-glutamate 5-phosphate. The polypeptide is Glutamate 5-kinase (Cupriavidus pinatubonensis (strain JMP 134 / LMG 1197) (Cupriavidus necator (strain JMP 134))).